The following is a 341-amino-acid chain: Phosphoribosylformylglycinamidine cyclo-ligase (341 aa).

It belongs to the AIR synthase family.

The protein resides in the cytoplasm. The catalysed reaction is 2-formamido-N(1)-(5-O-phospho-beta-D-ribosyl)acetamidine + ATP = 5-amino-1-(5-phospho-beta-D-ribosyl)imidazole + ADP + phosphate + H(+). The protein operates within purine metabolism; IMP biosynthesis via de novo pathway; 5-amino-1-(5-phospho-D-ribosyl)imidazole from N(2)-formyl-N(1)-(5-phospho-D-ribosyl)glycinamide: step 2/2. In Picosynechococcus sp. (strain ATCC 27264 / PCC 7002 / PR-6) (Agmenellum quadruplicatum), this protein is Phosphoribosylformylglycinamidine cyclo-ligase.